A 400-amino-acid chain; its full sequence is MNNLAFLFPGQGSQFVGMGKSFWNDFVLAKRLFEEASDAISMDVKKLCFDGDMTELTRTMNAQPAILTVSVIAYQVYMQEIGIKPHFLAGHSLGEYSALVCAGVLSFQEAVKLIRQRGILMQNADPEQLGTMAAITQVYIQPLQDLCTEISTEDFPVGVACMNSDQQHVISGHRQAVEFVIKKAERMGANHTYLNVSAPFHSSMMRSASEQFQTALNQYSFRDAEWPIISNVTAIPYNNGHSVREHLQTHMTMPVRWAESMHYLLLHGVTEVIEMGPKNVLVGLLKKITNHIAAYPLGQTSDLHLLSDSAERNENIVNLRKKQLNKMMIQSIIARNYNKDAKTYSNLTTPLFPQIQLLKERVERKEVELSAEELEHSIHLCQLICEAKQLPTWEQLRILK.

Residues serine 92 and histidine 201 contribute to the active site.

This sequence belongs to the FabD family.

The enzyme catalyses holo-[ACP] + malonyl-CoA = malonyl-[ACP] + CoA. In terms of biological role, is involved in the mycosubtilin synthetase assembly, by catalyzing the transfer of malonyl groups to a specific acyl-carrier-protein domain on MycA. The sequence is that of Malonyl CoA-acyl carrier protein transacylase (fenF) from Bacillus subtilis.